Consider the following 562-residue polypeptide: MATISPGGAYIGTPSPFLGKKLKPFSLTSPILSFKPTVKLNSSCRAQLIDTVHNLFIGVGVGLPCTVMECGDMIYRSTLPKSNGLTITAPGVALALTALSYLWATPGVAPGFFDMFVLAFVERLFRPTFRKDDFVVGKKLGEGSFGVVYKVSLSKKRSNEEGEYVLKKATEYGAVEIWMNERVRRACGNSCADFVYGFLDKSSKKGPEYWLLWKYEGESTLAGLMQSKEFPYNVETIILGKVQDLPKGLERENKIIQTIMRQLLFALDGLHSTGIIHRDVKPQNIIFSEGSRSFKIIDLGAAADLRVGINYIPKEFLLDPRYAAPEQYIMSTQTPSAPSAPVAAALSPVLWQMNLPDRFDIYSIGLIFLQMAFPSLRSDSNLIQFNRQLKRCDYDLTAWRKLVEPRASADLRRGFELVDLDGGIGWELLTSMVRYKARQRISAKAALAHPYFDRQGLLALSVMQNLRMQYFRATQQDYSEAANWVIQLMAKNGTEKDGGFTETQLQELREKEPRKKANAQRNALASALRLQRKLVKTVTETIDEISDGRKTVWWNRWIPREE.

Residues 1-45 (MATISPGGAYIGTPSPFLGKKLKPFSLTSPILSFKPTVKLNSSCR) constitute a chloroplast transit peptide. A Protein kinase domain is found at 134–452 (FVVGKKLGEG…AKAALAHPYF (319 aa)). ATP is bound by residues 140 to 148 (LGEGSFGVV) and lysine 167. The active-site Proton acceptor is the aspartate 279. Serine 526 carries the phosphoserine modification. Phosphothreonine occurs at positions 537 and 541.

This sequence belongs to the protein kinase superfamily. Ser/Thr protein kinase family. Post-translationally, phosphorylated.

It localises to the plastid. It is found in the chloroplast thylakoid membrane. The catalysed reaction is L-seryl-[protein] + ATP = O-phospho-L-seryl-[protein] + ADP + H(+). It carries out the reaction L-threonyl-[protein] + ATP = O-phospho-L-threonyl-[protein] + ADP + H(+). Functionally, serine/threonine protein kinase required for state transition by phosphorylating light-harvesting complex II outer antennae (LCHII). State transition plays a central role in response to environmental changes and allows to adjust to changing light conditions via the redistribution of light excitation energy between photosystem II (PSII) and photosystem I (PSI). Phosphorylates the minor light harvesting protein LHCB4.2/CP29 and is involved in the light-dependent phosphorylation of TSP9. Acts as a key component of the long-term response (LTR) signaling pathway. Mediates phosphorylation-dependent PTAC16 subcellular localization to regulate plastid gene expression. In Arabidopsis thaliana (Mouse-ear cress), this protein is Serine/threonine-protein kinase STN7, chloroplastic (STN7).